A 388-amino-acid polypeptide reads, in one-letter code: Transposase for insertion sequence element IS406 (388 aa).

It belongs to the transposase mutator family.

In terms of biological role, required for the transposition of the insertion element. The protein is Transposase for insertion sequence element IS406 of Burkholderia multivorans (strain ATCC 17616 / 249).